A 222-amino-acid chain; its full sequence is ATP-dependent Clp protease proteolytic subunit 1 (222 aa).

S121 functions as the Nucleophile in the catalytic mechanism. The active site involves H146.

It belongs to the peptidase S14 family. In terms of assembly, fourteen ClpP subunits assemble into 2 heptameric rings which stack back to back to give a disk-like structure with a central cavity, resembling the structure of eukaryotic proteasomes.

The protein localises to the cytoplasm. It catalyses the reaction Hydrolysis of proteins to small peptides in the presence of ATP and magnesium. alpha-casein is the usual test substrate. In the absence of ATP, only oligopeptides shorter than five residues are hydrolyzed (such as succinyl-Leu-Tyr-|-NHMec, and Leu-Tyr-Leu-|-Tyr-Trp, in which cleavage of the -Tyr-|-Leu- and -Tyr-|-Trp bonds also occurs).. Its function is as follows. Cleaves peptides in various proteins in a process that requires ATP hydrolysis. Has a chymotrypsin-like activity. Plays a major role in the degradation of misfolded proteins. This chain is ATP-dependent Clp protease proteolytic subunit 1, found in Thermobifida fusca (strain YX).